The following is a 680-amino-acid chain: tRNA 5-methylaminomethyl-2-thiouridine biosynthesis bifunctional protein MnmC (680 aa).

The segment at 1–245 (MSHPPIQTAT…KREMLTGILP (245 aa)) is tRNA (mnm(5)s(2)U34)-methyltransferase. Residues 270–680 (IGGGIVSALT…PVQQRVSVLS (411 aa)) are FAD-dependent cmnm(5)s(2)U34 oxidoreductase.

It in the N-terminal section; belongs to the methyltransferase superfamily. tRNA (mnm(5)s(2)U34)-methyltransferase family. In the C-terminal section; belongs to the DAO family. It depends on FAD as a cofactor.

The protein resides in the cytoplasm. It carries out the reaction 5-aminomethyl-2-thiouridine(34) in tRNA + S-adenosyl-L-methionine = 5-methylaminomethyl-2-thiouridine(34) in tRNA + S-adenosyl-L-homocysteine + H(+). Catalyzes the last two steps in the biosynthesis of 5-methylaminomethyl-2-thiouridine (mnm(5)s(2)U) at the wobble position (U34) in tRNA. Catalyzes the FAD-dependent demodification of cmnm(5)s(2)U34 to nm(5)s(2)U34, followed by the transfer of a methyl group from S-adenosyl-L-methionine to nm(5)s(2)U34, to form mnm(5)s(2)U34. This is tRNA 5-methylaminomethyl-2-thiouridine biosynthesis bifunctional protein MnmC from Yersinia enterocolitica serotype O:8 / biotype 1B (strain NCTC 13174 / 8081).